A 468-amino-acid chain; its full sequence is Siroheme synthase (468 aa).

The interval 1 to 203 is precorrin-2 dehydrogenase /sirohydrochlorin ferrochelatase; it reads MQYLPIFLNI…GQEEEAEGAL (203 aa). NAD(+) is bound by residues 22–23 and 43–44; these read TV and PK. Residue Ser-128 is modified to Phosphoserine. Residues 216–468 form a uroporphyrinogen-III C-methyltransferase region; the sequence is GEVYLVGAGP…VPDREPLDAR (253 aa). Pro-225 provides a ligand contact to S-adenosyl-L-methionine. Residue Asp-248 is the Proton acceptor of the active site. Lys-270 acts as the Proton donor in catalysis. Residues 301–303, Ile-306, 331–332, Met-383, and Gly-412 contribute to the S-adenosyl-L-methionine site; these read GGD and TA.

In the N-terminal section; belongs to the precorrin-2 dehydrogenase / sirohydrochlorin ferrochelatase family. It in the C-terminal section; belongs to the precorrin methyltransferase family.

The catalysed reaction is uroporphyrinogen III + 2 S-adenosyl-L-methionine = precorrin-2 + 2 S-adenosyl-L-homocysteine + H(+). It carries out the reaction precorrin-2 + NAD(+) = sirohydrochlorin + NADH + 2 H(+). The enzyme catalyses siroheme + 2 H(+) = sirohydrochlorin + Fe(2+). It functions in the pathway cofactor biosynthesis; adenosylcobalamin biosynthesis; precorrin-2 from uroporphyrinogen III: step 1/1. The protein operates within cofactor biosynthesis; adenosylcobalamin biosynthesis; sirohydrochlorin from precorrin-2: step 1/1. Its pathway is porphyrin-containing compound metabolism; siroheme biosynthesis; precorrin-2 from uroporphyrinogen III: step 1/1. It participates in porphyrin-containing compound metabolism; siroheme biosynthesis; siroheme from sirohydrochlorin: step 1/1. It functions in the pathway porphyrin-containing compound metabolism; siroheme biosynthesis; sirohydrochlorin from precorrin-2: step 1/1. In terms of biological role, multifunctional enzyme that catalyzes the SAM-dependent methylations of uroporphyrinogen III at position C-2 and C-7 to form precorrin-2 via precorrin-1. Then it catalyzes the NAD-dependent ring dehydrogenation of precorrin-2 to yield sirohydrochlorin. Finally, it catalyzes the ferrochelation of sirohydrochlorin to yield siroheme. This is Siroheme synthase from Nitrosococcus oceani (strain ATCC 19707 / BCRC 17464 / JCM 30415 / NCIMB 11848 / C-107).